We begin with the raw amino-acid sequence, 316 residues long: Thymidylate synthase (316 aa).

DUMP contacts are provided by residues R23 and 178-179 (RR). Catalysis depends on C198, which acts as the Nucleophile. DUMP is bound by residues 218 to 221 (RSGD), N229, and 259 to 261 (HIY). Position 221 (D221) interacts with (6R)-5,10-methylene-5,6,7,8-tetrahydrofolate. A315 is a binding site for (6R)-5,10-methylene-5,6,7,8-tetrahydrofolate.

This sequence belongs to the thymidylate synthase family. Bacterial-type ThyA subfamily. In terms of assembly, homodimer.

The protein resides in the cytoplasm. The enzyme catalyses dUMP + (6R)-5,10-methylene-5,6,7,8-tetrahydrofolate = 7,8-dihydrofolate + dTMP. It participates in pyrimidine metabolism; dTTP biosynthesis. Catalyzes the reductive methylation of 2'-deoxyuridine-5'-monophosphate (dUMP) to 2'-deoxythymidine-5'-monophosphate (dTMP) while utilizing 5,10-methylenetetrahydrofolate (mTHF) as the methyl donor and reductant in the reaction, yielding dihydrofolate (DHF) as a by-product. This enzymatic reaction provides an intracellular de novo source of dTMP, an essential precursor for DNA biosynthesis. The polypeptide is Thymidylate synthase (Latilactobacillus sakei subsp. sakei (strain 23K) (Lactobacillus sakei subsp. sakei)).